The following is a 1211-amino-acid chain: Sterol 3-beta-glucosyltransferase (1211 aa).

Residues methionine 1–serine 10 show a composition bias toward basic and acidic residues. The interval methionine 1 to aspartate 61 is disordered. Positions glutamate 196–leucine 235 constitute a GRAM 1 domain. Residues valine 248–phenylalanine 347 enclose the PH domain. Disordered stretches follow at residues leucine 422–arginine 452 and valine 500–tryptophan 531. Residues threonine 423–serine 432 show a composition bias toward acidic residues. Basic and acidic residues predominate over residues serine 507–serine 525. One can recognise a GRAM 2 domain in the interval serine 586 to lysine 652. UDP-alpha-D-glucose-binding residues include serine 770, arginine 771, aspartate 773, asparagine 1046, asparagine 1072, valine 1073, histidine 1075, histidine 1088, serine 1091, glycine 1092, threonine 1093, aspartate 1112, and glutamine 1113.

The protein belongs to the glycosyltransferase 28 family.

It localises to the cytoplasm. The protein localises to the preautophagosomal structure membrane. It catalyses the reaction a sterol + UDP-alpha-D-glucose = a sterol 3-beta-D-glucoside + UDP + H(+). The catalysed reaction is ergosterol + UDP-alpha-D-glucose = ergosteryl 3-beta-D-glucoside + UDP + H(+). Sterol glycosyltransferase responsible for the glycosylation of ergosterol to form ergosterol-glucoside. Shows also activity in vitro on other sterols such as cholesterol, beta-sitosterol, stigmasterol and tomatidine. Probable sterol 3-beta-glucosyltransferase that mediates autophagic degradation of peroxisomes (pexophagy). The polypeptide is Sterol 3-beta-glucosyltransferase (Komagataella phaffii (strain GS115 / ATCC 20864) (Yeast)).